Reading from the N-terminus, the 125-residue chain is Large ribosomal subunit protein uL22 (125 aa).

It belongs to the universal ribosomal protein uL22 family. In terms of assembly, part of the 50S ribosomal subunit.

This protein binds specifically to 23S rRNA; its binding is stimulated by other ribosomal proteins, e.g. L4, L17, and L20. It is important during the early stages of 50S assembly. It makes multiple contacts with different domains of the 23S rRNA in the assembled 50S subunit and ribosome. Functionally, the globular domain of the protein is located near the polypeptide exit tunnel on the outside of the subunit, while an extended beta-hairpin is found that lines the wall of the exit tunnel in the center of the 70S ribosome. This Erythrobacter litoralis (strain HTCC2594) protein is Large ribosomal subunit protein uL22.